A 328-amino-acid chain; its full sequence is Telomere-binding protein cav (328 aa).

The segment at 107–320 (RRKMVQPYPE…NISLQNSGSE (214 aa)) is required for binding to Su(var)205. The interval 139–228 (DRWQKQKSQN…EFQTEHTDCP (90 aa)) is disordered. 2 stretches are compositionally biased toward polar residues: residues 144–167 (QKSQ…QQDS) and 180–189 (ANTNRYSVSQ). 2 consecutive short sequence motifs (su(var)205-binding Pro-containing repeat) follow at residues 228–232 (PETQM) and 281–287 (PETETNE). The span at 295–319 (INSESMSIGPSIDSEGNISLQNSGS) shows a compositional bias: polar residues. Positions 295–328 (INSESMSIGPSIDSEGNISLQNSGSEPIDVDSMA) are disordered.

Interacts (via C-terminus) with Su(var)205 dimer (via hinge and chromoshadow domain) and with moi to form the terminin, telomere-capping, complex. Interacts with HP6, which is also part of the terminin complex.

The protein resides in the nucleus. It localises to the chromosome. It is found in the telomere. Binds to chromosome ends in a sequence-dependent manner and is required for telomere capping. This chain is Telomere-binding protein cav, found in Drosophila erecta (Fruit fly).